Reading from the N-terminus, the 2474-residue chain is MDPVYVDIDADSAFLKALQRAYPMFEVEPRQVTPNDHANARAFSHLAIKLIEQEIDPDSTILDIGSAPARRMMSDRKYHCVCPMRSAEDPERLANYARKLASAAGKVLDRNISGKIGDLQAVMAVPDTETPTFCLHTDVSCRQRADVAIYQDVYAVHAPTSLYHQAIKGVRLAYWVGFDTTPFMYNAMAGAYPSYSTNWADEQVLKAKNIGLCSTDLTEGRRGKLSIMRGKKLEPCDRVLFSVGSTLYPESRKLLKSWHLPSVFHLKGKLSFTCRCDTVVSCEGYVVKRITMSPGLYGKTTGYAVTHHADGFLMCKTTDTVDGERVSFSVCTYVPATICDQMTGILATEVTPEDAQKLLVGLNQRIVVNGRTQRNTNTMKNYMIPVVAQAFSKWAKECRKDMEDEKLLGVRERTLTCCCLWAFKKQKTHTVYKRPDTQSIQKVQAEFDSFVVPSLWSSGLSIPLRTRIKWLLSKVPKTDLTPYSGDAQEARDAEKEAEEEREAELTLEALPPLQAAQEDVQVEIDVEQLEDRAGAGIIETPRGAIKVTAQPTDHVVGEYLVLSPQTVLRSQKLSLIHALAEQVKTCTHSGRAGRYAVEAYDGRVLVPSGYAISPEDFQSLSESATMVYNEREFVNRKLHHIAMHGPALNTDEESYELVRAERTEHEYVYDVDQRRCCKKEEAAGLVLVGDLTNPPYHEFAYEGLKIRPACPYKIAVIGVFGVPGSGKSAIIKNLVTRQDLVTSGKKENCQEITTDVMRQRGLEISARTVDSLLLNGCNRPVDVLYVDEAFACHSGTLLALIALVRPRQKVVLCGDPKQCGFFNMMQMKVNYNHNICTQVYHKSISRRCTLPVTAIVSSLHYEGKMRTTNEYNKPIVVDTTGSTKPDPGDLVLTCFRGWVKQLQIDYRGHEVMTAAASQGLTRKGVYAVRQKVNENPLYASTSEHVNVLLTRTEGKLVWKTLSGDPWIKTLQNPPKGNFKATIKEWEVEHASIMAGICSHQMTFDTFQNKANVCWAKSLVPILETAGIKLNDRQWSQIIQAFKEDKAYSPEVALNEICTRMYGVDLDSGLFSKPLVSVYYADNHWDNRPGGKMFGFNPEAASILERKYPFTKGKWNINKQICVTTRRIEDFNPTTNIIPANRRLPHSLVAEHRPVKGERMEWLVNKINGHHVLLVSGCSLALPTKRVTWVAPLGVRGADYTYNLELGLPATLGRYDLVVINIHTPFRIHHYQQCVDHAMKLQMLGGDSLRLLKPGGSLLIRAYGYADRTSERVICVLGRKFRSSRALKPPCVTSNTEMFFLFSNFDNGRRNFTTHVMNNQLNAAFVGQATRAGCAPSYRVKRMDIAKNDEECVVNAANPRGLPGDGVCKAVYKKWPESFKNSATPVGTAKTVMCGTYPVIHAVGPNFSNYSESEGDRELAAAYREVAKEVTRLGVNSVAIPLLSTGVYSGGKDRLTQSLNHLFTAMDSTDADVVIYCRDKEWEKKISEAIQMRTQVELLDEHISIDCDVVRVHPDSSLAGRKGYSTTEGALYSYLEGTRFHQTAVDMAEIYTMWPKQTEANEQVCLYALGESIESIRQKCPVDDADASSPPKTVPCLCRYAMTPERVTRLRMNHVTSIIVCSSFPLPKYKIEGVQKVKCSKVMLFDHNVPSRVSPREYRPSQESVQEASTTTSLTHSQFDLSVDGKILPVPSDLDADAPALEPALDDGAIHTLPSATGNLAAVSDWVMSTVPVAPPRRRRGRNLTVTCDEREGNITPMASVRFFRAELCPVVQETAETRDTAMSLQAPPSTATELSHPPISFGAPSETFPITFGDFNEGEIESLSSELLTFGDFLPGEVDDLTDSDWSTCSDTDDELRLDRAGGYIFSSDTGPGHLQQKSVRQSVLPVNTLEEVHEEKCYPPKLDEAKEQLLLKKLQESASMANRSRYQSRKVENMKATIIQRLKRGCRLYLMSETPKVPTYRTTYPAPVYSPPINVRLSNPESAVAACNEFLARNYPTVSSYQITDEYDAYLDMVDGSESCLDRATFNPSKLRSYPKQHAYHAPSIRSAVPSPFQNTLQNVLAAATKRNCNVTQMRELPTLDSAVFNVECFKKFACNQEYWEEFAASPIRITTENLTTYVTKLKGPKAAALFAKTHNLLPLQEVPMDRFTVDMKRDVKVTPGTKHTEERPKVQVIQAAEPLATAYLCGIHRELVRRLNAVLLPNVHTLFDMSAEDFDAIIAAHFKPGDTVLETDIASFDKSQDDSLALTALMLLEDLGVDHSLLDLIEAAFGEISSCHLPTGTRFKFGAMMKSGMFLTLFVNTLLNITIASRVLEDRLTKSACAAFIGDDNIIHGVVSDELMAARCATWMNMEVKIIDAVVSQKAPYFCGGFILHDIVTGTACRVADPLKRLFKLGKPLAAGDEQDEDRRRALADEVVRWQRTGLIDELEKAVYSRYEVQGISVVVMSMATFASSRSNFEKLRGPVVTLYGGPK.

The 232-residue stretch at 28-259 (EPRQVTPNDH…ESRKLLKSWH (232 aa)) folds into the Alphavirus-like MT domain. H37 (for mRNA-capping enzyme nsP1 activity) is an active-site residue. Residues H79, E129, C134, and C141 each contribute to the Zn(2+) site. The tract at residues 295–450 (GLYGKTTGYA…QKVQAEFDSF (156 aa)) is membrane-binding and oligomerization. S-palmitoyl cysteine; by host attachment occurs at residues C417 and C419. Positions 482-502 (PYSGDAQEARDAEKEAEEERE) are disordered. One can recognise a (+)RNA virus helicase ATP-binding domain in the interval 690–842 (DLTNPPYHEF…HNICTQVYHK (153 aa)). 721-728 (GVPGSGKS) contributes to the a ribonucleoside 5'-triphosphate binding site. Positions 843-991 (SISRRCTLPV…IKEWEVEHAS (149 aa)) constitute a (+)RNA virus helicase C-terminal domain. A Peptidase C9 domain is found at 1004-1327 (DTFQNKANVC…NQLNAAFVGQ (324 aa)). The nucleolus localization signal stretch occupies residues 1005–1024 (TFQNKANVCWAKSLVPILET). C1013 functions as the For cysteine protease nsP2 activity in the catalytic mechanism. A Nuclear export signal motif is present at residues 1058-1067 (TRMYGVDLDS). H1083 serves as the catalytic For cysteine protease nsP2 activity. Residues 1182–1186 (PTKRV) carry the Nuclear localization signal motif. In terms of domain architecture, Macro spans 1334–1493 (APSYRVKRMD…KISEAIQMRT (160 aa)). 6 residues coordinate ADP-D-ribose: D1343, N1357, G1365, G1445, V1446, and Y1447. C1595, C1597, C1620, and C1638 together coordinate Zn(2+). Positions 1651-1672 (RVSPREYRPSQESVQEASTTTS) are disordered. Positions 1659–1857 (PSQESVQEAS…TCSDTDDELR (199 aa)) are HVD. Residues 1660–1672 (SQESVQEASTTTS) show a composition bias toward polar residues. Interaction with host CD2AP regions lie at residues 1726 to 1739 (VMST…RRRR) and 1756 to 1767 (PMASVRFFRAEL). The tract at residues 1745 to 1793 (VTCDEREGNITPMASVRFFRAELCPVVQETAETRDTAMSLQAPPSTATE) is interaction with host FHL1. The short motif at 1812 to 1815 (FGDF) is the FGDF; binding to host G3BP1 element. Residues 1820–1828 (IESLSSELL) form an interaction with host CD2AP region. Positions 1830 to 1833 (FGDF) match the FGDF; binding to host G3BP1 motif. Positions 2228 to 2343 (DTVLETDIAS…HGVVSDELMA (116 aa)) constitute a RdRp catalytic domain.

Homododecamer. The enzyme forms a membrane-associated dodecameric ring with a central channel for the exchange of between the viral replication factories and the host cytoplasm. Interacts with non-structural protein 3. Interacts with RNA-directed RNA polymerase nsP4. Interacts with protease nsP2. Interacts with itself. Interacts with host STING1; this interaction results in inhibition of cGAS-STING signaling and increased levels of palmitoylation and protein stabilization of nsP1. Interacts with host TMEM45B; this interaction leads to viral replication inhibition. As to quaternary structure, interacts with mRNA-capping enzyme nsP1. Interacts (via C-terminus) with host G3BP1; this interaction inhibits the formation of host stress granules on viral mRNAs and the nsp3-G3BP1 complexes bind viral RNAs and probably orchestrate the assembly of viral replication complexes. Interacts (via C-terminus) with host G3BP2; this interaction inhibits the formation of host stress granules on viral mRNAs and the nsp3-G3BP2 complexes bind viral RNAs and probably orchestrate the assembly of viral replication complexes. Interacts (via C-terminus) with host NAP1L1. Interacts (via C-terminus) with host NAP1L4. Interacts (via C-terminus) with host DHX9; this interaction allows the recruitment of DHX9 to the plasma membrane, where it associates with viral replication complexes and may play a role in the translation-to-replication switch. Interacts (via C-terminus) with host FHL1 (via LIM domain 1); this interaction is required for viral RNA replication. Interacts (via C-terminus) with host CD2AP; this interaction plays a role in initiation of viral replication. Interacts (via C-terminus) with host SH3KBP1; this interaction plays a role in initiation of viral replication. In terms of assembly, interacts with mRNA-capping enzyme nsP1. Interacts with protease nsP2. interacts with itself. Interacts with host TMEM45B; this interaction leads to viral replication inhibition. Interacts with RNA-directed RNA polymerase nsP4. Interacts with mRNA-capping enzyme nsP1. Interacts with KPNA1/karyopherin-alpha1; this interaction probably allows the active transport of protease nsP2 into the host nucleus. Mg(2+) serves as cofactor. Requires Mn(2+) as cofactor. Specific enzymatic cleavages in vivo yield mature proteins. The processing of the polyprotein is temporally regulated. In early stages (1.7 hpi), P1234 is first cleaved in trans through its nsP2 protease activity, releasing P123 and nsP4, which associate to form the early replication complex. At the same time, P1234 is also cut at the nsP1/nsP2 site early in infection but with lower efficiency. After replication of the viral minus-strand RNAs (4 hpi), the polyproteins are cut at the nsP1/nsP2 and nsP2/nsP3 sites very efficiently, preventing accumulation of P123 and P1234 and allowing the formation of the late replication complex. NsP3/nsP4 site is not cleaved anymore and P34 is produced rather than nsP4. In terms of processing, specific enzymatic cleavages in vivo yield mature proteins. The processing of the polyprotein is temporally regulated. In early stages (1.7 hpi), P123 is cleaved at the nsP1/nsP2 site with low efficiency. After replication of the viral minus-strand RNAs (4 hpi), the polyproteins are cut at the nsP1/nsP2 and nsP2/nsP3 sites very efficiently, preventing accumulation of P123 and allowing the formation of the late replication complex. Post-translationally, palmitoylated by host palmitoyltransferases ZDHHC2 and ZDHHC19. Palmitoylation is increased by the interacton with host STING1. Phosphorylated by host on serines and threonines. In terms of processing, ubiquitinated; targets the protein for rapid degradation via the ubiquitin system. Nsp4 is present in extremely low quantities due to low frequency of translation through the amber stop-codon and the degradation by the ubiquitin pathway.

The protein localises to the host cytoplasmic vesicle membrane. It localises to the host cell membrane. The protein resides in the host cell projection. It is found in the host filopodium. Its subcellular location is the host nucleus. The protein localises to the host cytoplasm. It carries out the reaction GTP + S-adenosyl-L-methionine = N(7)-methyl-GTP + S-adenosyl-L-homocysteine. It catalyses the reaction N(7)-methyl-GTP + L-histidyl-[protein] = N(tele)-(N(7)-methylguanosine 5'-phospho)-L-histidyl-[protein] + diphosphate. The enzyme catalyses N(tele)-(N(7)-methylguanosine 5'-phospho)-L-histidyl-[protein] + a 5'-end diphospho-(purine-ribonucleoside) in mRNA + H(+) = a 5'-end (N(7)-methyl 5'-triphosphoguanosine)-(purine-ribonucleoside) in mRNA + L-histidyl-[protein]. The catalysed reaction is a 5'-end triphospho-ribonucleoside in mRNA + H2O = a 5'-end diphospho-ribonucleoside in mRNA + phosphate + H(+). It carries out the reaction a ribonucleoside 5'-triphosphate + H2O = a ribonucleoside 5'-diphosphate + phosphate + H(+). It catalyses the reaction ATP + H2O = ADP + phosphate + H(+). The enzyme catalyses RNA(n) + a ribonucleoside 5'-triphosphate = RNA(n+1) + diphosphate. The catalysed reaction is 4-O-(ADP-D-ribosyl)-L-aspartyl-[protein] + H2O = L-aspartyl-[protein] + ADP-D-ribose + H(+). It carries out the reaction 5-O-(ADP-D-ribosyl)-L-glutamyl-[protein] + H2O = L-glutamyl-[protein] + ADP-D-ribose + H(+). It catalyses the reaction RNA(n) + ATP = RNA(n)-3'-adenine ribonucleotide + diphosphate. The enzyme catalyses ADP-alpha-D-ribose 1''-phosphate + H2O = ADP-D-ribose + phosphate. Functionally, inactive precursor of the viral replicase, which is activated by cleavages carried out by the viral protease nsP2. The early replication complex formed by the polyprotein P123 and nsP4 synthesizes minus-strand RNAs. As soon P123 is cleaved into mature proteins, the plus-strand RNAs synthesis begins. In terms of biological role, cytoplasmic capping enzyme that catalyzes two virus-specific reactions: methyltransferase and guanylyltransferase. mRNA-capping is necessary since all viral RNAs are synthesized in the cytoplasm, and host capping enzymes are restricted to the nucleus. The enzymatic reaction involves a covalent link between 7-methyl-GMP and nsP1, whereas eukaryotic capping enzymes form a covalent complex only with GMP. nsP1 capping consists in the following reactions: GTP is first methylated into 7-methyl-GMP and then is covalently linked to nsP1 to form the m7GMp-nsP1 complex from which 7-methyl-GMP complex is transferred to the mRNA to create the cap structure. NsP1 is also needed for the initiation of the minus-strand RNAs synthesis. At the initiation of virus replication, mediates the assembly of the viral replication complex made of the non-structural proteins, the association of this complex with the inner face of the plasma membrane and the formation of membranous spherules that serve as replication complex factories. Forms the neck of these spherules with a central channel for mediating communication and the passage of RNA, nucleotides, and small proteins between the viral replication complex and the host cytoplasm. Palmitoylated nsP1 is remodeling host cell cytoskeleton, and induces filopodium-like structure formation at the surface of the host cell. Its function is as follows. Multifunctional protein whose N-terminus is part of the RNA polymerase complex and displays NTPase, RNA triphosphatase and helicase activities. NTPase and RNA triphosphatase are involved in viral RNA capping and helicase keeps a check on the dsRNA replication intermediates. The C-terminus harbors a protease that specifically cleaves the polyproteins and releases the mature proteins. Required for the shutoff of minus-strand RNAs synthesis. Specifically inhibits the host IFN response by promoting the nuclear export of host STAT1. Also inhibits host transcription by inducing the rapid proteasome-dependent degradation of POLR2A, a catalytic subunit of the RNAPII complex. The resulting inhibition of cellular protein synthesis serves to ensure maximal viral gene expression and to evade host immune response. Functionally, seems to be essential for minus-strand RNAs and subgenomic 26S mRNAs synthesis. Displays mono-ADP-ribosylhydrolase activity. ADP-ribosylation is a post-translational modification that controls various processes of the host cell and the virus probably needs to revert it for optimal viral replication. Binds proteins of G3BP family and sequesters them into the viral RNA replication complexes thereby inhibiting the formation of host stress granules on viral mRNAs. The nsp3-G3BP complexes bind viral RNAs and probably orchestrate the assembly of viral replication complexes, thanks to the ability of G3BP family members to self-assemble and bind DNA. RNA dependent RNA polymerase. Replicates genomic and antigenomic RNA by recognizing replications specific signals. The early replication complex formed by the polyprotein P123 and nsP4 synthesizes minus-strand RNAs. The late replication complex composed of fully processed nsP1-nsP4 is responsible for the production of genomic and subgenomic plus-strand RNAs. This is Polyprotein P1234 from Chikungunya virus (strain S27-African prototype) (CHIKV).